Consider the following 215-residue polypeptide: L-fuculose phosphate aldolase (215 aa).

Substrate is bound by residues 28–29 (GN), 43–44 (TG), and 71–72 (SS). The Proton donor/acceptor role is filled by Glu-73. Residues Glu-73, His-92, His-94, and His-155 each coordinate Zn(2+).

The protein belongs to the aldolase class II family. AraD/FucA subfamily. In terms of assembly, homotetramer. Requires Zn(2+) as cofactor.

It catalyses the reaction L-fuculose 1-phosphate = (S)-lactaldehyde + dihydroxyacetone phosphate. It participates in carbohydrate degradation; L-fucose degradation; L-lactaldehyde and glycerone phosphate from L-fucose: step 3/3. Its activity is regulated as follows. Inhibited by phosphoglycolohydroxamate (PGH). Functionally, involved in the degradation of L-fucose and D-arabinose. Catalyzes the reversible cleavage of L-fuculose 1-phosphate (Fuc1P) to yield dihydroxyacetone phosphate (DHAP) and L-lactaldehyde. Also able to catalyze the reversible cleavage of D-ribulose 1-phosphate, but FucA has a higher affinity for L-fuculose 1-phosphate and L-lactaldehyde than for D-ribulose 1-phosphate and glycolaldehyde, respectively. FucA possesses a high specificity for the dihydroxyacetone phosphate (DHAP), but accepts a great variety of different aldehydes and has a strong preference for L-configurated alpha-hydroxy aldehydes. FucA generates a vicinal diol unit having the absolute (3R,4R)-cis configuration (D-erythro). This Escherichia coli (strain K12) protein is L-fuculose phosphate aldolase.